The primary structure comprises 610 residues: Calmegin (610 aa).

Residues 1-19 form the signal peptide; the sequence is MHFQAFWLCLGLLFISINA. Over 20-471 the chain is Lumenal; that stretch reads EFMDDDVETE…LMAAAEGHPW (452 aa). Lys128 carries the N6-acetyllysine modification. Residues Cys151 and Cys185 are joined by a disulfide bond. The disordered stretch occupies residues 258–338; sequence VPPIKPPKEI…KPDDWNEDTD (81 aa). Residues 263–284 are compositionally biased toward basic and acidic residues; it reads PPKEIEDPNDKKPEEWDERAKI. A run of 8 repeats spans residues 267-280, 284-297, 303-316, 322-335, 339-352, 356-369, 370-383, and 384-397. Residues 317 to 332 are compositionally biased toward basic and acidic residues; it reads DEPKFIPDPNAEKPDD. The segment at 317–350 is interaction with PPIB; it reads DEPKFIPDPNAEKPDDWNEDTDGEWEAPQILNPA. A disulfide bridge connects residues Cys351 and Cys355. A helical membrane pass occupies residues 472-492; sequence LWLIYLVTAGVPIALITSFCW. The Cytoplasmic portion of the chain corresponds to 493-610; it reads PRKVKKKHKD…SVRKRRVRKD (118 aa). The span at 521–548 shows a compositional bias: basic and acidic residues; the sequence is QEEKEEKAALEKPMDLEEEKKQNDGEML. Residues 521 to 610 are disordered; it reads QEEKEEKAAL…SVRKRRVRKD (90 aa). Over residues 549–571 the composition is skewed to acidic residues; that stretch reads EKEEESEPEEKSEEEIEIIEGQE. A phosphoserine mark is found at Ser560, Ser576, Ser579, Ser581, Ser591, Ser594, and Ser601. Residues 601–610 show a composition bias toward basic residues; the sequence is SVRKRRVRKD.

It belongs to the calreticulin family. In terms of assembly, interacts with PPIB. Interacts with ADAM2. Interacts with PDILT. As to expression, detected in testis (at protein level). Detected in testis.

It is found in the endoplasmic reticulum membrane. Its function is as follows. Functions during spermatogenesis as a chaperone for a range of client proteins that are important for sperm adhesion onto the egg zona pellucida and for subsequent penetration of the zona pellucida. Required for normal sperm migration from the uterus into the oviduct. Required for normal male fertility. Binds calcium ions. This Homo sapiens (Human) protein is Calmegin (CLGN).